A 669-amino-acid polypeptide reads, in one-letter code: Phosphatidylinositol-3-phosphate phosphatase MTMR1 (669 aa).

The residue at position 1 (methionine 1) is an N-acetylmethionine. The segment covering 1–17 (MDRPVAAAAAASAASCE) has biased composition (low complexity). Positions 1–55 (MDRPVAAAAAASAASCEGAGGPGPGPGASWRPSRVAGGASASSRHPSIETLDSPT) are disordered. Phosphoserine is present on residues serine 47 and serine 53. In terms of domain architecture, GRAM spans 94 to 165 (NKLAQMEEAP…GVISRVEKIG (72 aa)). The Myotubularin phosphatase domain maps to 230-605 (GWKVYDPVSE…SHLELWVNYY (376 aa)). A 1,2-diacyl-sn-glycero-3-phospho-(1D-myo-inositol-3-phosphate)-binding residues include asparagine 355, asparagine 380, and isoleucine 381. Cysteine 442 acts as the Phosphocysteine intermediate in catalysis. Serine 443, aspartate 444, glycine 445, tryptophan 446, aspartate 447, arginine 448, and arginine 488 together coordinate a 1,2-diacyl-sn-glycero-3-phospho-(1D-myo-inositol-3-phosphate). Serine 443 contacts phosphate. 4 residues coordinate phosphate: glycine 445, tryptophan 446, aspartate 447, and arginine 448. Positions 612–669 (MRPQMPIHQNLKELLAIKAELQKRVEDLQREMATRTISSSSERGSSPTHSATPVHTSV) are required for dimerization. Residues 644–669 (ATRTISSSSERGSSPTHSATPVHTSV) form a disordered region. The segment covering 649 to 661 (SSSSERGSSPTHS) has biased composition (low complexity).

It belongs to the protein-tyrosine phosphatase family. Non-receptor class myotubularin subfamily. Homodimer. In terms of tissue distribution, widely expressed. Detected in skeletal muscle, heart, lung, liver and brain.

Its subcellular location is the cell membrane. The protein localises to the cytoplasm. It catalyses the reaction a 1,2-diacyl-sn-glycero-3-phospho-(1D-myo-inositol-3-phosphate) + H2O = a 1,2-diacyl-sn-glycero-3-phospho-(1D-myo-inositol) + phosphate. It carries out the reaction 1,2-dioctanoyl-sn-glycero-3-phospho-(1-D-myo-inositol-3-phosphate) + H2O = 1,2-dioctanoyl-sn-glycero-3-phospho-(1D-myo-inositol) + phosphate. The enzyme catalyses a 1,2-diacyl-sn-glycero-3-phospho-(1D-myo-inositol-3,5-bisphosphate) + H2O = a 1,2-diacyl-sn-glycero-3-phospho-(1D-myo-inositol-5-phosphate) + phosphate. Lipid phosphatase that specifically dephosphorylates the D-3 position of phosphatidylinositol 3-phosphate, generating phosphatidylinositol. Could also dephosphorylate phosphatidylinositol 3,5-bisphosphate to produce phosphatidylinositol 5-phosphate. This Mus musculus (Mouse) protein is Phosphatidylinositol-3-phosphate phosphatase MTMR1.